The primary structure comprises 346 residues: Methionine import ATP-binding protein MetN 1 (346 aa).

The ABC transporter domain occupies 2-241 (IELKNVSKVF…PQHVTTKKFV (240 aa)). 38 to 45 (GYSGAGKS) is an ATP binding site.

This sequence belongs to the ABC transporter superfamily. Methionine importer (TC 3.A.1.24) family. The complex is composed of two ATP-binding proteins (MetN), two transmembrane proteins (MetI) and a solute-binding protein (MetQ).

The protein localises to the cell membrane. The catalysed reaction is L-methionine(out) + ATP + H2O = L-methionine(in) + ADP + phosphate + H(+). It carries out the reaction D-methionine(out) + ATP + H2O = D-methionine(in) + ADP + phosphate + H(+). In terms of biological role, part of the ABC transporter complex MetNIQ involved in methionine import. Responsible for energy coupling to the transport system. This chain is Methionine import ATP-binding protein MetN 1, found in Bacillus cereus (strain ZK / E33L).